We begin with the raw amino-acid sequence, 478 residues long: MTSRTAPASPVVHVIGAGLAGSEAAWQIARAGVRVVLHEMRPVRTTEAHKTDGLAELVCSNSFRSDDAANNAVGLLHAEMRRLGSLIMQAADANQVPAGGALAVDRDGFSAAVTKALAEHPLIEICREEIDGLPPQEWTNVVIATGPLTSAPLADAIRGLTDESALAFFDAIAPIVHRDSIDMSVAWFQSRYDKVGPGGTGADYLNCPMTREQYDAFVDALIEGEKVDFKDWEKDTPYFDGCLPIEVMAERGRETLRHGPMKPVGLTNPHNPTVKPYAIVQLRQDNKLGTLYNMVGFQTKLKHGAQLRVFRTIPGLENAEFARLGGLHRNTFLNSPKLLDESLRLRASPRLRFAGQMTGCEGYVESASIGLFAGLAAAADLVGQSLAPPPPTTALGALLGHITGGHIETIDAGPRSFQPMNINFGLFPPLANPPTKGPDGKRLRGPEKSVAKKQALSARALADIDAWIAAHLKLPKAA.

16-21 is a binding site for FAD; that stretch reads GAGLAG. A disordered region spans residues 429–448; sequence PLANPPTKGPDGKRLRGPEK. Positions 438–448 are enriched in basic and acidic residues; the sequence is PDGKRLRGPEK.

It belongs to the MnmG family. TrmFO subfamily. It depends on FAD as a cofactor.

The protein resides in the cytoplasm. It catalyses the reaction uridine(54) in tRNA + (6R)-5,10-methylene-5,6,7,8-tetrahydrofolate + NADH + H(+) = 5-methyluridine(54) in tRNA + (6S)-5,6,7,8-tetrahydrofolate + NAD(+). The catalysed reaction is uridine(54) in tRNA + (6R)-5,10-methylene-5,6,7,8-tetrahydrofolate + NADPH + H(+) = 5-methyluridine(54) in tRNA + (6S)-5,6,7,8-tetrahydrofolate + NADP(+). In terms of biological role, catalyzes the folate-dependent formation of 5-methyl-uridine at position 54 (M-5-U54) in all tRNAs. The polypeptide is Methylenetetrahydrofolate--tRNA-(uracil-5-)-methyltransferase TrmFO (Rhodopseudomonas palustris (strain ATCC BAA-98 / CGA009)).